The sequence spans 363 residues: MAFEIPEDSTQLSQFVTLLIFTPLGIVVTALRFVAVRRVTRKVGFEDWLAVIATIFFILTNLAGLMAISILNGRQLTQEVIESPSDYSRMRKWDIAGLFFYFAQTLSVKLSILAFYHRIFGISSTRCRICIYLLAAAQTILFIAFCIFQGFQCIPLQRYFDLSVPGECKDEGTVILGGELPNSLVDFAMVILAMIMIRPLQLSFSDKFRVTVLFGLGFVVGIIGFVKIAVTYSTSELYAFSMIALWTGVQMFTALLCCSLPMYNTFLPIVADFWNRLSHHSLGWVSRVRSSQSSSKNSRKHGPYDSDQSPGPGWDDLVAYNGTKGLTLPQAPYHGDNHALGNVSPITHPQAYSKQTTRQFDVV.

Transmembrane regions (helical) follow at residues 15–35 (FVTL…RFVA), 48–68 (WLAV…LMAI), 95–115 (IAGL…ILAF), 129–149 (ICIY…CIFQ), 175–195 (ILGG…LAMI), 210–230 (VTVL…KIAV), and 237–257 (LYAF…ALLC). The tract at residues 293-312 (SSSKNSRKHGPYDSDQSPGP) is disordered. The N-linked (GlcNAc...) asparagine glycan is linked to N321. Positions 344–363 (SPITHPQAYSKQTTRQFDVV) are disordered.

Belongs to the SAT4 family.

It is found in the membrane. It functions in the pathway secondary metabolite biosynthesis. Its function is as follows. Part of the gene cluster that mediates the biosynthesis of wortmanamides A and B, reduced long-chain polyketides amidated with a specific omega-amino acid, 5-aminopentanoic acid (5PA). The PKS modules of TwmB are involved in the synthesis of the polyketide backbone, whereas the non-canonical C domain of TwmB is a bonafide condensation domain that specifically selects 5PA and catalyzes amidation to release polyketide chain. The C domain clearly prefers C16 and C18 fatty acyl substrates, which is consistent with simultaneous formation of both octaketide and nonaketide acyl amides wortmanamides A and B. Because TwmB lacks a designated enoylreductase (ER) domain, the required activity is provided the enoyl reductase TwmE. The roles of the remaining enzymes have still to be clarified. The sequence is that of Wortmanamides biosynthesis cluster protein C from Talaromyces wortmannii (Penicillium wortmannii).